The primary structure comprises 620 residues: Transcription factor GTE11 (620 aa).

A disordered region spans residues 1 to 35 (MTVRNGGFPGDYNRNSFDSPGGCDDSPNASKDDET). One can recognise a Bromo domain in the interval 124 to 230 (TSTMLRMKQC…KFFEVRWKTI (107 aa)). Positions 270-351 (NSLLEPAKRV…EFLRENQKKD (82 aa)) constitute an NET domain. At S417 the chain carries Phosphoserine. Positions 445 to 620 (EKRYRAALLK…GNEVEEGEID (176 aa)) are transcription activation domain. Residues 470–544 (NQNEKRDPET…MEKSVEINEN (75 aa)) are a coiled coil. Disordered stretches follow at residues 491–511 (KKKE…ARRK) and 597–620 (EDED…GEID).

Interacts with BT1, BT2 and BT4.

It localises to the nucleus. This is Transcription factor GTE11 (GTE11) from Arabidopsis thaliana (Mouse-ear cress).